The chain runs to 497 residues: Bypass of stop codon protein 6 (497 aa).

Over 1–72 the chain is Lumenal; the sequence is MDASSVPPKV…KVKTYPLNYQ (72 aa). Phosphoserine is present on residues S37 and S41. N-linked (GlcNAc...) asparagine glycosylation occurs at N49. The helical transmembrane segment at 73–93 threads the bilayer; the sequence is TVPLVKLQVIACLIMFVVFGM. The Cytoplasmic segment spans residues 94–144; sequence NDQTVGALLPTLIEYYHISRVDVSNVFIVQLCGYVMASLSKERLNKHFGMR. A helical transmembrane segment spans residues 145–165; that stretch reads GGMLLAAGLCIVFLIILATAP. Residues 166–167 are Lumenal-facing; that stretch reads SS. The chain crosses the membrane as a helical span at residues 168–188; it reads FYVCMFCGLPLGLGIGILDST. At 189-205 the chain is on the cytoplasmic side; the sequence is GNVLMGSLLVHKNELMG. The chain crosses the membrane as a helical span at residues 206-226; that stretch reads IMHGLYGAAAMVTPPLVSYFV. At 227–232 the chain is on the lumenal side; it reads EWGHWS. A helical membrane pass occupies residues 233–253; the sequence is LFFLIPLFFSIIGMIVIFPAF. Topologically, residues 254–300 are cytoplasmic; sequence KFETASKYDYLCSVENKESNNDVEEAGDNSLMESTKASPGFFELLRN. The chain crosses the membrane as a helical span at residues 301–321; it reads PAIFLYSLYLFLYLGAEITTG. Over 322–340 the chain is Lumenal; that stretch reads SWFFSYLLETKSSNKVAMS. Residues 341-361 form a helical membrane-spanning segment; the sequence is YIAASFWTGLTVGRLCLGFVT. The Cytoplasmic portion of the chain corresponds to 362 to 373; sequence ERFFENEYKASK. The helical transmembrane segment at 374–394 threads the bilayer; the sequence is AYAFLTLSSYTLFVLVGLINS. The Lumenal portion of the chain corresponds to 395-397; it reads SSV. The helical transmembrane segment at 398 to 418 threads the bilayer; that stretch reads FYFVVLFFVVFCCGTFIGPLF. The Cytoplasmic portion of the chain corresponds to 419–439; the sequence is PNASIVALQVLPKRLHVSGVG. The helical transmembrane segment at 440-460 threads the bilayer; sequence VAVAVGGCGGAAIPYLAGVIA. Topologically, residues 461–462 are lumenal; it reads HT. Residues 463–483 form a helical membrane-spanning segment; that stretch reads VGIQYIPLLCWIMVALFTLEW. Residues 484–497 are Cytoplasmic-facing; it reads TLYPKFIKGHEEYF.

Belongs to the major facilitator superfamily.

It localises to the golgi apparatus. It is found in the cis-Golgi network membrane. Probable transporter. This chain is Bypass of stop codon protein 6 (BSC6), found in Saccharomyces cerevisiae (strain ATCC 204508 / S288c) (Baker's yeast).